The chain runs to 622 residues: Probable potassium transport system protein Kup (622 aa).

12 helical membrane passes run 7–27 (LAIGAIGIVFGDIGTSPLYAF), 44–64 (VLGVVSLIFWSMTLIVAIQYV), 95–115 (GWLVVLLGVFATSLFYGDSMI), 133–153 (PELQGFVIPIALVLLVGLFVL), 165–185 (FAPVMIVYFTVIATLGLISIV), 199–219 (AVLFFINDGFLAFLALGSVVL), 243–263 (WFGFVMPCLLLNYFGQGAMIV), 290–310 (LVILATFATFIASQAVISGAF), 338–358 (IYIPVINWALMVAVILLVLTF), 370–390 (IAVTGAVTIDTLLMAVLLVGV), 395–415 (WYYAAPVVIVFLIIDGAYFAA), and 422–442 (DGGWFPLVVGLIVFTLLTTWA).

The protein belongs to the HAK/KUP transporter (TC 2.A.72) family.

The protein localises to the cell inner membrane. The catalysed reaction is K(+)(in) + H(+)(in) = K(+)(out) + H(+)(out). Transport of potassium into the cell. Likely operates as a K(+):H(+) symporter. The protein is Probable potassium transport system protein Kup of Erythrobacter litoralis (strain HTCC2594).